The chain runs to 104 residues: PLAT domain-containing protein 3 (104 aa).

The PLAT domain maps to methionine 1–leucine 104.

This is PLAT domain-containing protein 3 from Arabidopsis thaliana (Mouse-ear cress).